The chain runs to 147 residues: Fluoride-specific ion channel FluC 1 (147 aa).

The next 4 helical transmembrane spans lie at 29-49 (YVYI…ISFL), 61-81 (IANL…IAFF), 90-110 (AITT…LELI), and 118-138 (FITL…LCYV). The Na(+) site is built by G97 and T100.

It belongs to the fluoride channel Fluc/FEX (TC 1.A.43) family.

The protein resides in the cell membrane. It carries out the reaction fluoride(in) = fluoride(out). Na(+) is not transported, but it plays an essential structural role and its presence is essential for fluoride channel function. Functionally, fluoride-specific ion channel. Important for reducing fluoride concentration in the cell, thus reducing its toxicity. This Staphylococcus aureus (strain MRSA252) protein is Fluoride-specific ion channel FluC 1.